Consider the following 340-residue polypeptide: Tryptophan--tRNA ligase (340 aa).

Residues 11–13 and 19–20 each bind ATP; these read RPT and GH. A 'HIGH' region motif is present at residues 12–20; sequence PTGKLHLGH. L-tryptophan is bound at residue Asp140. ATP contacts are provided by residues 152-154, Leu194, and 202-206; these read GND and KMSKS. Positions 202–206 match the 'KMSKS' region motif; the sequence is KMSKS.

The protein belongs to the class-I aminoacyl-tRNA synthetase family. In terms of assembly, homodimer.

The protein localises to the cytoplasm. It catalyses the reaction tRNA(Trp) + L-tryptophan + ATP = L-tryptophyl-tRNA(Trp) + AMP + diphosphate + H(+). Functionally, catalyzes the attachment of tryptophan to tRNA(Trp). The sequence is that of Tryptophan--tRNA ligase from Streptococcus mutans serotype c (strain ATCC 700610 / UA159).